A 131-amino-acid chain; its full sequence is Global transcriptional regulator Spx (131 aa).

Cys10 and Cys13 are joined by a disulfide.

This sequence belongs to the ArsC family. Spx subfamily. Interacts with the C-terminal domain of the alpha subunit of the RNAP.

It is found in the cytoplasm. Global transcriptional regulator that plays a key role in stress response and exerts either positive or negative regulation of genes. Acts by interacting with the C-terminal domain of the alpha subunit of the RNA polymerase (RNAP). This interaction can enhance binding of RNAP to the promoter region of target genes and stimulate their transcription, or block interaction of RNAP with activator. This chain is Global transcriptional regulator Spx, found in Staphylococcus haemolyticus (strain JCSC1435).